The primary structure comprises 259 residues: Alpha-acetolactate decarboxylase (259 aa).

Belongs to the alpha-acetolactate decarboxylase family.

The enzyme catalyses (2S)-2-acetolactate + H(+) = (R)-acetoin + CO2. The protein operates within polyol metabolism; (R,R)-butane-2,3-diol biosynthesis; (R,R)-butane-2,3-diol from pyruvate: step 2/3. In terms of biological role, converts acetolactate into acetoin, which can be excreted by the cells. This may be a mechanism for controlling the internal pH of cells in the stationary stage. In Raoultella terrigena (Klebsiella terrigena), this protein is Alpha-acetolactate decarboxylase (budA).